The following is a 339-amino-acid chain: UDP-N-acetylenolpyruvoylglucosamine reductase (339 aa).

One can recognise an FAD-binding PCMH-type domain in the interval Val-19–Val-189. Residue Arg-166 is part of the active site. Ser-239 (proton donor) is an active-site residue. Glu-335 is an active-site residue.

This sequence belongs to the MurB family. Requires FAD as cofactor.

The protein localises to the cytoplasm. The enzyme catalyses UDP-N-acetyl-alpha-D-muramate + NADP(+) = UDP-N-acetyl-3-O-(1-carboxyvinyl)-alpha-D-glucosamine + NADPH + H(+). The protein operates within cell wall biogenesis; peptidoglycan biosynthesis. Cell wall formation. The polypeptide is UDP-N-acetylenolpyruvoylglucosamine reductase (Pseudomonas fluorescens (strain Pf0-1)).